The chain runs to 920 residues: Protein FAN (920 aa).

One can recognise a GRAM domain in the interval 176-247 (RLARTSFDKN…QDVRRIYKRR (72 aa)). The BEACH-type PH domain maps to 189 to 286 (SVSEKLHMEC…DRDDLYFYIA (98 aa)). The BEACH domain occupies 290–575 (EHHAAEHTAE…QLFVTPHPRR (286 aa)). 6 WD repeats span residues 631–661 (IHKE…KMFS), 673–703 (FSNM…YFYS), 715–743 (GHDD…KVWS), 764–794 (EHDV…NIWD), 806–836 (CHSG…NVID), and 887–917 (GHTG…MFWK).

Couples the p55 TNF-receptor (TNF-R55 / TNFR1) to neutral sphingomyelinase (N-SMASE). Specifically binds to the N-smase activation domain of TNF-R55. May regulate ceramide production by N-SMASE. This Mus musculus (Mouse) protein is Protein FAN (Nsmaf).